A 240-amino-acid polypeptide reads, in one-letter code: MLTRKQHELLLFIHERLKETGIPPSFDEMKEALDLASKSGIHRLITALEERGFIRRLPNRARALEVLRLPDSIAPGLSPQKKFAPSVIEGSLGKVASVQPVRPAPAPQNSEAPATVSVPVMGRIAAGVPISAIQNQTHMLSLPPEMIGAGEHYALEVKGDSMIDAGIFDGDTVIIKRGDTANPGEIVVALVDEEEATLKRFRREGASIALEAANPAYETRIFGPDRVHVQGKLVGLIRRY.

Positions 26–46 (FDEMKEALDLASKSGIHRLIT) form a DNA-binding region, H-T-H motif. Catalysis depends on for autocatalytic cleavage activity residues S161 and K199.

This sequence belongs to the peptidase S24 family. In terms of assembly, homodimer.

It carries out the reaction Hydrolysis of Ala-|-Gly bond in repressor LexA.. In terms of biological role, represses a number of genes involved in the response to DNA damage (SOS response), including recA and lexA. In the presence of single-stranded DNA, RecA interacts with LexA causing an autocatalytic cleavage which disrupts the DNA-binding part of LexA, leading to derepression of the SOS regulon and eventually DNA repair. This is LexA repressor from Brucella ovis (strain ATCC 25840 / 63/290 / NCTC 10512).